The sequence spans 404 residues: Glucose-1-phosphate adenylyltransferase (404 aa).

Alpha-D-glucose 1-phosphate-binding positions include Tyr99, Gly164, 179–180, and Ser197; that span reads EK.

The protein belongs to the bacterial/plant glucose-1-phosphate adenylyltransferase family. In terms of assembly, homotetramer.

It catalyses the reaction alpha-D-glucose 1-phosphate + ATP + H(+) = ADP-alpha-D-glucose + diphosphate. Its pathway is glycan biosynthesis; glycogen biosynthesis. In terms of biological role, involved in the biosynthesis of ADP-glucose, a building block required for the elongation reactions to produce glycogen. Catalyzes the reaction between ATP and alpha-D-glucose 1-phosphate (G1P) to produce pyrophosphate and ADP-Glc. This Rhodococcus opacus (strain B4) protein is Glucose-1-phosphate adenylyltransferase.